We begin with the raw amino-acid sequence, 166 residues long: Cold-inducible RNA-binding protein B (166 aa).

Residues 5 to 83 (GKLFIGGLNF…RQIRVDQAGK (79 aa)) enclose the RRM domain. The interval 68–166 (GKAVDGRQIR…DSYDSYATHE (99 aa)) is disordered. Over residues 92–115 (YRGGSSGGRGFFRGGRGRGGGDRG) the composition is skewed to gly residues. The segment covering 133–149 (GSRDYYSSGRSQGSYGD) has biased composition (low complexity). A compositionally biased stretch (basic and acidic residues) spans 157-166 (DSYDSYATHE).

Interacts with prmt1. Interacts with elavl1/elrA (via RRM3). Associates with ribosomes. Methylated on arginine residues within RGG motifs. Methylation by prmt1 promotes cytoplasmic accumulation. In terms of tissue distribution, in adults, most abundant in testis, ovary, brain and liver, with lower expression in kidney and heart.

It is found in the nucleus. It localises to the nucleoplasm. The protein localises to the cytoplasm. Its function is as follows. Cold-inducible mRNA binding protein. Acts cooperatively with elavl1/elrA to stabilize AU-rich element (ARE)-containing mRNAs by binding to them and inhibiting their deadenylation. Essential for embryonic gastrulation and neural development, acting to maintain the expression of a set of adhesion molecules, and cell movement during embryogenesis. Required for pronephros development. The polypeptide is Cold-inducible RNA-binding protein B (cirbp-b) (Xenopus laevis (African clawed frog)).